A 146-amino-acid polypeptide reads, in one-letter code: Endothelial differentiation-related factor 1 homolog (146 aa).

The tract at residues 13 to 53 (RKKGSAAQSKSKQAVTAAQRKGEAVETSKKWAAGQNKQHVV) is disordered. Positions 17-31 (SAAQSKSKQAVTAAQ) are enriched in low complexity. Residues 32 to 41 (RKGEAVETSK) show a composition bias toward basic and acidic residues. The HTH cro/C1-type domain occupies 80 to 134 (IQQGRQNKGLTQKDLATKINEKPQIIAEYECGKAIPNNQVMGKIERAIGLKLRGK). The segment at residues 91–110 (QKDLATKINEKPQIIAEYEC) is a DNA-binding region (H-T-H motif).

It localises to the nucleus. In terms of biological role, probable transcriptional coactivator. In Danio rerio (Zebrafish), this protein is Endothelial differentiation-related factor 1 homolog (edf1).